The sequence spans 462 residues: MDTKHFLPLDFSTQVNSSLTSPTGRGSMAAPSLHPSLGPGIGSPGQLHSPISTLSSPINGMGPPFSVISSPMGPHSMSVPTTPTLGFSTGSPQLSSPMNPVSSSEDIKPPLGLNGVLKVPAHPSGNMASFTKHICAICGDRSSGKHYGVYSCEGCKGFFKRTVRKDLTYTCRDNKDCLIDKRQRNRCQYCRYQKCLAMGMKREAVQEERQRGKDRNENEVESTSSANEDMPVERILEAELAVEPKTETYVEANMGLNPSSPNDPVTNICQAADKQLFTLVEWAKRIPHFSELPLDDQVILLRAGWNELLIASFSHRSIAVKDGILLATGLHVHRNSAHSAGVGAIFDRVLTELVSKMRDMQMDKTELGCLRAIVLFNPDSKGLSNPAEVEALREKVYASLEAYCKHKYPEQPGRFAKLLLRLPALRSIGLKCLEHLFFFKLIGDTPIDTFLMEMLEAPHQMT.

Residues 1–107 (MDTKHFLPLD…MNPVSSSEDI (107 aa)) are disordered. The modulating stretch occupies residues 1 to 134 (MDTKHFLPLD…GNMASFTKHI (134 aa)). Residue K4 forms a Glycyl lysine isopeptide (Lys-Gly) (interchain with G-Cter in SUMO2) linkage. Over residues 11-24 (FSTQVNSSLTSPTG) the composition is skewed to polar residues. Phosphoserine is present on residues S21 and S27. The span at 49-58 (SPISTLSSPI) shows a compositional bias: polar residues. S56 and S70 each carry phosphoserine; by MAPK8 and MAPK9. Residues 78–104 (SVPTTPTLGFSTGSPQLSSPMNPVSSS) are compositionally biased toward polar residues. T82 bears the Phosphothreonine; by MAPK8 and MAPK9 mark. K108 is covalently cross-linked (Glycyl lysine isopeptide (Lys-Gly) (interchain with G-Cter in SUMO)). Phosphoserine is present on S129. Zn(2+) contacts are provided by C135 and C138. The NR C4-type zinc finger occupies 135-155 (CAICGDRSSGKHYGVYSCEGC). The nuclear receptor DNA-binding region spans 135-200 (CAICGDRSSG…RYQKCLAMGM (66 aa)). K145 carries the post-translational modification N6-acetyllysine; by EP300. Positions 152 and 155 each coordinate Zn(2+). Residues 160–165 (KRTVRK) are nuclear localization signal. Positions 171, 177, 187, and 190 each coordinate Zn(2+). The NR C4-type zinc finger occupies 171–195 (CRDNKDCLIDKRQRNRCQYCRYQKC). Residues 201-224 (KREAVQEERQRGKDRNENEVESTS) form a hinge region. Over residues 206–218 (QEERQRGKDRNEN) the composition is skewed to basic and acidic residues. The interval 206–228 (QEERQRGKDRNENEVESTSSANE) is disordered. Positions 227–458 (NEDMPVERIL…TFLMEMLEAP (232 aa)) constitute an NR LBD domain. S259 bears the Phosphoserine mark. Residue S260 is modified to Phosphoserine; by MAPK8 and MAPK9. Positions 316 and 327 each coordinate 9-cis-retinoate. Positions 316 and 327 each coordinate all-trans-retinoate. Positions 348–368 (RVLTELVSKMRDMQMDKTELG) are required for nuclear export.

It belongs to the nuclear hormone receptor family. NR2 subfamily. In terms of assembly, homodimer. Heterodimer (via C-terminus) with RARA; required for ligand-dependent retinoic acid receptor transcriptional activity; association with RARA is enhanced by pulsatile shear stress. Heterodimer with PPARA (via the leucine-like zipper in the LBD); the interaction is required for PPARA transcriptional activity. Heterodimerizes with PPARG. Heterodimerizes (via NR LBD) with RARB. Heterodimerizes with NR1H4; the heterodimerization enhances the binding affinity for LXXLL motifs from coactivators. Interacts with NCOA3 and NCOA6 coactivators. Interacts with coactivator FAM120B. Interacts with coactivator PELP1, SENP6, SFPQ, DNTTIP2 and RNF8. Interacts with PRMT2. Interacts with ASXL1. Interacts with BHLHE40/DEC1, BHLHE41/DEC2, NCOR1 and NCOR2. Interacts in a ligand-dependent fashion with MED1 and NCOA1. Interacts with VDR. Interacts with EP300; the interaction is decreased by 9-cis retinoic acid. Heterodimer (via C-terminus) with NR4A1 (via DNA-binding domain); DNA-binding of the heterodimer is enhanced by 9-cis retinoic acid. NR4A1 competes with EP300 for interaction with RXRA and thereby attenuates EP300 mediated acetylation of RXRA. In the absence of hormonal ligand, interacts with TACC1. Interacts ith IGFBP3. (Microbial infection) Interacts (via the DNA binding domain) with HCV core protein; the interaction enhances the transcriptional activities of the RXRA/RARA and the RXRA/PPARA heterodimers. In terms of processing, acetylated by EP300; acetylation enhances DNA binding and transcriptional activity. Phosphorylated on serine and threonine residues mainly in the N-terminal modulating domain. Constitutively phosphorylated on Ser-21 in the presence or absence of ligand. Under stress conditions, hyperphosphorylated by activated JNK on Ser-56, Ser-70, Thr-82 and Ser-260. Phosphorylated on Ser-27, in vitro, by PKA. This phosphorylation is required for repression of cAMP-mediated transcriptional activity of RARA. Post-translationally, ubiquitinated by UBR5, leading to its degradation: UBR5 specifically recognizes and binds ligand-bound RXRA when it is not associated with coactivators (NCOAs). In presence of NCOAs, the UBR5-degron is not accessible, preventing its ubiquitination and degradation. In terms of processing, sumoylation negatively regulates transcriptional activity. Desumoylated specifically by SENP6. Expressed in lung fibroblasts (at protein level). Expressed in monocytes. Highly expressed in liver, also found in kidney and brain.

It is found in the nucleus. It localises to the cytoplasm. The protein resides in the mitochondrion. Receptor for retinoic acid that acts as a transcription factor. Forms homo- or heterodimers with retinoic acid receptors (RARs) and binds to target response elements in response to their ligands, all-trans or 9-cis retinoic acid, to regulate gene expression in various biological processes. The RAR/RXR heterodimers bind to the retinoic acid response elements (RARE) composed of tandem 5'-AGGTCA-3' sites known as DR1-DR5 to regulate transcription. The high affinity ligand for retinoid X receptors (RXRs) is 9-cis retinoic acid. In the absence of ligand, the RXR-RAR heterodimers associate with a multiprotein complex containing transcription corepressors that induce histone deacetylation, chromatin condensation and transcriptional suppression. On ligand binding, the corepressors dissociate from the receptors and coactivators are recruited leading to transcriptional activation. Serves as a common heterodimeric partner for a number of nuclear receptors, such as RARA, RARB and PPARA. The RXRA/RARB heterodimer can act as a transcriptional repressor or transcriptional activator, depending on the RARE DNA element context. The RXRA/PPARA heterodimer is required for PPARA transcriptional activity on fatty acid oxidation genes such as ACOX1 and the P450 system genes. Together with RARA, positively regulates microRNA-10a expression, thereby inhibiting the GATA6/VCAM1 signaling response to pulsatile shear stress in vascular endothelial cells. Acts as an enhancer of RARA binding to RARE DNA element. May facilitate the nuclear import of heterodimerization partners such as VDR and NR4A1. Promotes myelin debris phagocytosis and remyelination by macrophages. Plays a role in the attenuation of the innate immune system in response to viral infections, possibly by negatively regulating the transcription of antiviral genes such as type I IFN genes. Involved in the regulation of calcium signaling by repressing ITPR2 gene expression, thereby controlling cellular senescence. The polypeptide is Retinoic acid receptor RXR-alpha (RXRA) (Homo sapiens (Human)).